The primary structure comprises 91 residues: Small ribosomal subunit protein uS19 (91 aa).

The segment at 72 to 91 (GEFSPTRTYTGHGSEKGKKK) is disordered.

It belongs to the universal ribosomal protein uS19 family.

Protein S19 forms a complex with S13 that binds strongly to the 16S ribosomal RNA. The sequence is that of Small ribosomal subunit protein uS19 from Mycoplasma mobile (strain ATCC 43663 / 163K / NCTC 11711) (Mesomycoplasma mobile).